Reading from the N-terminus, the 374-residue chain is 2,7-anhydro-N-acetylneuraminate hydratase (374 aa).

Positions 13, 14, 35, 38, 70, 72, 75, 92, 93, 162, and 163 each coordinate NAD(+).

The protein belongs to the Gfo/Idh/MocA family. In terms of assembly, homodimer. NAD(+) is required as a cofactor.

The enzyme catalyses N-acetyl-2,7-anhydro-alpha-neuraminate + H2O = N-acetyl-alpha-neuraminate. Neu5Ac is produced in the presence of NAD(+) or NADH, but not in the presence of FAD. Hydratase involved in the degradation of sialic acids, which are present in the host mucus layer and represent a much-coveted source of nutrients for R.gnavus, a prevalent member of the normal gut microbiota. Catalyzes the reversible conversion of the dehydrated form of N-acetylneuraminate (Neu5Ac), 2,7-anhydro-N-acetylneuraminate (2,7-AN), to Neu5Ac, allowing growth on 2,7-AN produced by the IT-sialidase NanH. Acts through a multistep mechanism involving a keto intermediate and cycling of NADH/NAD(+). This chain is 2,7-anhydro-N-acetylneuraminate hydratase, found in Mediterraneibacter gnavus (strain ATCC 29149 / DSM 114966 / JCM 6515 / VPI C7-9) (Ruminococcus gnavus).